The following is a 238-amino-acid chain: Urease accessory protein UreG (238 aa).

Positions 1-15 (MPPHLIDGEPHDHAH) are enriched in basic and acidic residues. A disordered region spans residues 1–27 (MPPHLIDGEPHDHAHDRPKRQRTPGEP). Residue 34–41 (GPVGSGKT) participates in GTP binding.

It belongs to the SIMIBI class G3E GTPase family. UreG subfamily. In terms of assembly, homodimer. UreD, UreF and UreG form a complex that acts as a GTP-hydrolysis-dependent molecular chaperone, activating the urease apoprotein by helping to assemble the nickel containing metallocenter of UreC. The UreE protein probably delivers the nickel.

It is found in the cytoplasm. Facilitates the functional incorporation of the urease nickel metallocenter. This process requires GTP hydrolysis, probably effectuated by UreG. The chain is Urease accessory protein UreG from Nocardia farcinica (strain IFM 10152).